The following is a 260-amino-acid chain: CD40 ligand (260 aa).

At 1 to 22 the chain is on the cytoplasmic side; sequence MIETYSQTAPRSVATGPPVSMK. Residues 23-46 traverse the membrane as a helical; Signal-anchor for type II membrane protein segment; that stretch reads IFMYLLTVFLITQMIGSALFAVYL. Over 47–260 the chain is Extracellular; the sequence is HRRLDKIEDE…GFTSFGLLKL (214 aa). The region spanning 121 to 260 is the THD domain; that stretch reads IAAHVISEAS…GFTSFGLLKL (140 aa). Cys177 and Cys217 are joined by a disulfide. Residue Asn239 is glycosylated (N-linked (GlcNAc...) asparagine).

The protein belongs to the tumor necrosis factor family. Homotrimer. Interacts with CD28. CD40 ligand, soluble form: Exists as either a monomer or a homotrimer. Forms a ternary complex between CD40 and integrins for CD40-CD40LG signaling. The soluble form derives from the membrane form by proteolytic processing.

Its subcellular location is the cell membrane. The protein localises to the cell surface. It is found in the secreted. In terms of biological role, cytokine that acts as a ligand to CD40/TNFRSF5. Costimulates T-cell proliferation and cytokine production. Its cross-linking on T-cells generates a costimulatory signal which enhances the production of IL4 and IL10 in conjunction with the TCR/CD3 ligation and CD28 costimulation. Induces the activation of NF-kappa-B. Induces the activation of kinases MAPK8 and PAK2 in T-cells. Mediates B-cell proliferation in the absence of co-stimulus as well as IgE production in the presence of IL4. Involved in immunoglobulin class switching. Its function is as follows. Acts as a ligand for integrins, specifically ITGA5:ITGB1 and ITGAV:ITGB3; both integrins and the CD40 receptor are required for activation of CD40-CD40LG signaling, which have cell-type dependent effects, such as B-cell activation, NF-kappa-B signaling and anti-apoptotic signaling. This Canis lupus familiaris (Dog) protein is CD40 ligand (CD40LG).